A 549-amino-acid polypeptide reads, in one-letter code: CTP synthase (549 aa).

The amidoligase domain stretch occupies residues 1–270 (MTKFVFVTGG…DRLICEELRL (270 aa)). Position 13 (Ser-13) interacts with CTP. Ser-13 serves as a coordination point for UTP. ATP-binding positions include 14 to 19 (SLGKGI) and Asp-71. Residues Asp-71 and Glu-144 each contribute to the Mg(2+) site. CTP is bound by residues 151 to 153 (DIE), 191 to 196 (KTKPTQ), and Lys-227. UTP contacts are provided by residues 191 to 196 (KTKPTQ) and Lys-227. The region spanning 295–547 (TIGMVGKYVD…VEAALAAQRQ (253 aa)) is the Glutamine amidotransferase type-1 domain. Gly-356 is an L-glutamine binding site. The Nucleophile; for glutamine hydrolysis role is filled by Cys-383. Residues 384–387 (LGMQ), Glu-407, and Arg-473 each bind L-glutamine. Residues His-520 and Glu-522 contribute to the active site.

Belongs to the CTP synthase family. Homotetramer.

The catalysed reaction is UTP + L-glutamine + ATP + H2O = CTP + L-glutamate + ADP + phosphate + 2 H(+). It catalyses the reaction L-glutamine + H2O = L-glutamate + NH4(+). It carries out the reaction UTP + NH4(+) + ATP = CTP + ADP + phosphate + 2 H(+). The protein operates within pyrimidine metabolism; CTP biosynthesis via de novo pathway; CTP from UDP: step 2/2. Its activity is regulated as follows. Allosterically activated by GTP, when glutamine is the substrate; GTP has no effect on the reaction when ammonia is the substrate. The allosteric effector GTP functions by stabilizing the protein conformation that binds the tetrahedral intermediate(s) formed during glutamine hydrolysis. Inhibited by the product CTP, via allosteric rather than competitive inhibition. Catalyzes the ATP-dependent amination of UTP to CTP with either L-glutamine or ammonia as the source of nitrogen. Regulates intracellular CTP levels through interactions with the four ribonucleotide triphosphates. The sequence is that of CTP synthase from Cupriavidus metallidurans (strain ATCC 43123 / DSM 2839 / NBRC 102507 / CH34) (Ralstonia metallidurans).